The sequence spans 628 residues: Pinene synthase, chloroplastic (628 aa).

The transit peptide at 1 to 36 (MALVSTAPLASKSCLHKSLISSTHELKALSRTIPAL) directs the protein to the chloroplast. Mg(2+)-binding residues include Asp379, Asp383, and Asp531. A DDXXD motif motif is present at residues 379–383 (DDMYD).

The protein belongs to the terpene synthase family. Tpsd subfamily. Requires Mg(2+) as cofactor. Mn(2+) is required as a cofactor. It depends on K(+) as a cofactor.

The protein resides in the plastid. It is found in the chloroplast. It catalyses the reaction (2E)-geranyl diphosphate = (1S,5S)-alpha-pinene + diphosphate. The enzyme catalyses (2E)-geranyl diphosphate = (1S,5S)-beta-pinene + diphosphate. The protein operates within terpene metabolism; oleoresin biosynthesis. Its function is as follows. Involved in defensive oleoresin formation in conifers in response to insect attack or other injury. Involved in monoterpene (C10) olefins biosynthesis. A mixture of alpha- and beta-pinene is produced by this enzyme. The chain is Pinene synthase, chloroplastic (ag3) from Abies grandis (Grand fir).